The chain runs to 271 residues: Tryptophan synthase alpha chain (271 aa).

Catalysis depends on proton acceptor residues Glu-49 and Asp-60.

Belongs to the TrpA family. Tetramer of two alpha and two beta chains.

The enzyme catalyses (1S,2R)-1-C-(indol-3-yl)glycerol 3-phosphate + L-serine = D-glyceraldehyde 3-phosphate + L-tryptophan + H2O. Its pathway is amino-acid biosynthesis; L-tryptophan biosynthesis; L-tryptophan from chorismate: step 5/5. In terms of biological role, the alpha subunit is responsible for the aldol cleavage of indoleglycerol phosphate to indole and glyceraldehyde 3-phosphate. In Nitrosococcus oceani (strain ATCC 19707 / BCRC 17464 / JCM 30415 / NCIMB 11848 / C-107), this protein is Tryptophan synthase alpha chain.